The following is a 506-amino-acid chain: Nostrin (506 aa).

The region spanning methionine 1–aspartate 260 is the F-BAR domain. Serine 114 carries the post-translational modification Phosphoserine. The stretch at serine 160–leucine 222 forms a coiled coil. The REM-1 domain occupies alanine 292 to glutamate 372. One can recognise an SH3 domain in the interval leucine 438–serine 497. Serine 479 bears the Phosphoserine mark.

As to quaternary structure, homotrimer. Interacts with DAB2. Interacts with NOS3, DNM2, WASL and CAV1. Interacts (via SH3 domain) with DNM2; this interaction allows the recruitment of NOS3 to dynamin-positive structures. Expressed at highest levels in heart, kidney, placenta and lung, and at lowest levels in brain, thymus and spleen. Present in vascular endothelial cells and placenta. Over-expressed in placenta from women with pre-eclampsia (at protein level).

It localises to the cell membrane. It is found in the cytoplasmic vesicle. The protein resides in the cytoplasm. Its subcellular location is the cytoskeleton. The protein localises to the nucleus. In terms of biological role, multivalent adapter protein which may decrease NOS3 activity by inducing its translocation away from the plasma membrane. The polypeptide is Nostrin (Homo sapiens (Human)).